Reading from the N-terminus, the 261-residue chain is Ribosome biogenesis protein nsa2 (261 aa).

Basic and acidic residues-rich tracts occupy residues M1 to S36 and K66 to P82. Disordered stretches follow at residues M1 to G44 and A64 to T97. A Nuclear localization signal motif is present at residues G15 to E22.

This sequence belongs to the eukaryotic ribosomal protein eS8 family. Ribosome biogenesis protein NSA2 subfamily. As to quaternary structure, component of the pre-66S ribosomal particle. Interacts with nop7 and rrp1. Interacts with rsa4 (via WD repeats).

It localises to the nucleus. It is found in the nucleolus. In terms of biological role, involved in the biogenesis of the 60S ribosomal subunit. May play a part in the quality control of pre-60S particles. The sequence is that of Ribosome biogenesis protein nsa2 (rbg-52) from Neurospora crassa (strain ATCC 24698 / 74-OR23-1A / CBS 708.71 / DSM 1257 / FGSC 987).